The primary structure comprises 515 residues: 2-isopropylmalate synthase (515 aa).

Residues 5 to 267 (VIIFDTTLRD…RTGINHEEIH (263 aa)) form the Pyruvate carboxyltransferase domain. Positions 14, 202, 204, and 238 each coordinate Mn(2+). A regulatory domain region spans residues 392–515 (KLNYLSVQSG…EMKQKKIATV (124 aa)).

This sequence belongs to the alpha-IPM synthase/homocitrate synthase family. LeuA type 1 subfamily. Homodimer. The cofactor is Mn(2+).

It is found in the cytoplasm. The enzyme catalyses 3-methyl-2-oxobutanoate + acetyl-CoA + H2O = (2S)-2-isopropylmalate + CoA + H(+). Its pathway is amino-acid biosynthesis; L-leucine biosynthesis; L-leucine from 3-methyl-2-oxobutanoate: step 1/4. Functionally, catalyzes the condensation of the acetyl group of acetyl-CoA with 3-methyl-2-oxobutanoate (2-ketoisovalerate) to form 3-carboxy-3-hydroxy-4-methylpentanoate (2-isopropylmalate). The polypeptide is 2-isopropylmalate synthase (Vibrio vulnificus (strain CMCP6)).